A 2242-amino-acid polypeptide reads, in one-letter code: Transcription factor sma-9 (2242 aa).

A coiled-coil region spans residues 120-383 (HQLAQQQAQQ…QQAQQAQLAQ (264 aa)). The span at 317–330 (AAQQAQAQNNASQQ) shows a compositional bias: low complexity. Disordered regions lie at residues 317-344 (AAQQ…SSTP), 494-553 (TPVA…SMSD), 583-617 (GAQS…SRSQ), 712-754 (LAAH…SSFP), and 1323-1349 (EDST…SPPL). Residues 331–344 (RPSVASTPALSSTP) are compositionally biased toward polar residues. Low complexity-rich tracts occupy residues 494-523 (TPVA…ATSS) and 539-550 (SSSKAASSGNES). A compositionally biased stretch (polar residues) spans 583–601 (GAQSSVDHDSNSGGSTRTS). The span at 1324–1338 (DSTSAEPSTSGQSLL) shows a compositional bias: polar residues. 5 consecutive C2H2-type zinc fingers follow at residues 1447–1469 (YICD…IKSH), 1475–1499 (FNCT…SKTH), 1700–1722 (LKCD…QHTH), 1734–1760 (YQCS…HGVH), and 1790–1814 (FMCV…SKTH). Positions 2029–2039 (SITSPIVSSST) are enriched in low complexity. Disordered stretches follow at residues 2029–2059 (SITS…PTHT) and 2085–2107 (STDK…PRPI). Residues 2085-2099 (STDKAHASESLSDRL) are compositionally biased toward basic and acidic residues. 2 C2H2-type zinc fingers span residues 2111 to 2134 (TKCQ…HVDH) and 2143 to 2167 (YKCP…VTAH). Residues 2219-2242 (HELYAQTQQGAGSSTSNQSPKAAN) form a disordered region. Residues 2223-2242 (AQTQQGAGSSTSNQSPKAAN) show a composition bias toward polar residues.

Expressed in the ventral nerve cord (VNC), pharynx, intestine and seam cells (at protein level).

It is found in the nucleus. In terms of biological role, transcription factor, probably acting as a transcriptional activator and repressor, involved in the TGF-beta-like dbl-1 signaling pathway. Plays a role in regulation of body size, and patterning of male-specific genital sensilla (simple sense organs), known as rays, and mating-associated structures, spicules. Required for the dorsoventral patterning of the postembryonic mesodermal lineage (M lineage), acting by antagonizing the TGF-beta-like dbl-1 signaling pathway, in part by repressing expression of transcription factor unc-130. Involved in egg-laying, perhaps via modulation of cholinergic neurotransmission. Involved in production of reactive oxygen species (ROS), acting downstream of the dbl-1 signaling pathway. Plays a role in the mitochondrial unfolded protein response (mtUPR). May play a role in modulating lifespan and in responses to proteotoxic stress. Functionally, transcription factor, probably acting as a transcriptional activator. Required for patterning of male-specific genital sensilla (simple sense organs), known as rays. Dispensable for regulation of body size. In Caenorhabditis elegans, this protein is Transcription factor sma-9.